A 341-amino-acid chain; its full sequence is RNA 3'-terminal phosphate cyclase (341 aa).

ATP-binding positions include Gln-102 and 283 to 287 (HLADQ). The Tele-AMP-histidine intermediate role is filled by His-308.

Belongs to the RNA 3'-terminal cyclase family. Type 1 subfamily.

The protein localises to the cytoplasm. It catalyses the reaction a 3'-end 3'-phospho-ribonucleotide-RNA + ATP = a 3'-end 2',3'-cyclophospho-ribonucleotide-RNA + AMP + diphosphate. Its function is as follows. Catalyzes the conversion of 3'-phosphate to a 2',3'-cyclic phosphodiester at the end of RNA. The mechanism of action of the enzyme occurs in 3 steps: (A) adenylation of the enzyme by ATP; (B) transfer of adenylate to an RNA-N3'P to produce RNA-N3'PP5'A; (C) and attack of the adjacent 2'-hydroxyl on the 3'-phosphorus in the diester linkage to produce the cyclic end product. The biological role of this enzyme is unknown but it is likely to function in some aspects of cellular RNA processing. This is RNA 3'-terminal phosphate cyclase from Pseudomonas aeruginosa (strain LESB58).